Consider the following 436-residue polypeptide: 3-ketoacyl-CoA thiolase (436 aa).

C99 acts as the Acyl-thioester intermediate in catalysis. Residues H392 and C422 each act as proton acceptor in the active site.

The protein belongs to the thiolase-like superfamily. Thiolase family. In terms of assembly, heterotetramer of two alpha chains (FadJ) and two beta chains (FadI).

The protein resides in the cytoplasm. It catalyses the reaction an acyl-CoA + acetyl-CoA = a 3-oxoacyl-CoA + CoA. The protein operates within lipid metabolism; fatty acid beta-oxidation. Functionally, catalyzes the final step of fatty acid oxidation in which acetyl-CoA is released and the CoA ester of a fatty acid two carbons shorter is formed. This Shewanella sp. (strain W3-18-1) protein is 3-ketoacyl-CoA thiolase.